A 1337-amino-acid polypeptide reads, in one-letter code: Nucleoporin POM152 (1337 aa).

A disordered region spans residues 1–48 (MEHRYNVFNDTPRGNHWMGSSVSGSPRPSYSSRPNVNTTRRFQYSDDE). Over 1–110 (MEHRYNVFND…TDVLEISKQR (110 aa)) the chain is Cytoplasmic. Positions 1 to 175 (MEHRYNVFND…SFNIPRLTFK (175 aa)) are pore side. The span at 19-37 (GSSVSGSPRPSYSSRPNVN) shows a compositional bias: low complexity. Residues serine 45 and serine 60 each carry the phosphoserine modification. A helical transmembrane segment spans residues 111–131 (TFAVILFLIIQCYKIYDLVIL). Topologically, residues 132–148 (KSGLPLSGLLFKNYRFN) are perinuclear space. The helical transmembrane segment at 149-169 (FISKYFIIDSFFLYVLPSFNI) threads the bilayer. Over 170-172 (PRL) the chain is Cytoplasmic. The helical transmembrane segment at 173–193 (TFKPWVVYLQILAMLLLNIFI) threads the bilayer. At 194 to 1337 (SSDHEFVLIS…FAKNDLFFNN (1144 aa)) the chain is on the perinuclear space side. The cisternal side stretch occupies residues 196–1337 (DHEFVLISLI…FAKNDLFFNN (1142 aa)). N-linked (GlcNAc...) asparagine glycosylation occurs at asparagine 280. 8 tandem repeats follow at residues 390–413 (DRCI…KLAY), 626–650 (DQCV…YYNT), 732–755 (KLCL…TLTY), 836–859 (KIKH…TVKF), 943–966 (EVCQ…ILEY), 1058–1077 (FLEP…SITF), 1157–1178 (EYCV…MIKY), and 1253–1276 (DIRE…SLTY). The 8 X 24 AA approximate repeats stretch occupies residues 390–1276 (DRCIGDSDNV…EGTPPFSLTY (887 aa)).

As to quaternary structure, component of the nuclear pore complex (NPC). NPC constitutes the exclusive means of nucleocytoplasmic transport. NPCs allow the passive diffusion of ions and small molecules and the active, nuclear transport receptor-mediated bidirectional transport of macromolecules such as proteins, RNAs, ribonucleoparticles (RNPs), and ribosomal subunits across the nuclear envelope. Due to its 8-fold rotational symmetry, all subunits are present with 8 copies or multiples thereof. Interacts with NUP188. In terms of processing, the N-terminus is blocked. Phosphorylated by CDC28.

It localises to the nucleus. It is found in the nuclear pore complex. Its subcellular location is the nucleus membrane. Its function is as follows. Functions as a component of the nuclear pore complex (NPC). NPC components, collectively referred to as nucleoporins (NUPs), can play the role of both NPC structural components and of docking or interaction partners for transiently associated nuclear transport factors. POM152 is important for the de novo assembly of NPCs. The protein is Nucleoporin POM152 (POM152) of Saccharomyces cerevisiae (strain ATCC 204508 / S288c) (Baker's yeast).